The following is a 1372-amino-acid chain: DNA-directed RNA polymerase subunit beta (1372 aa).

The protein belongs to the RNA polymerase beta chain family. The RNAP catalytic core consists of 2 alpha, 1 beta, 1 beta' and 1 omega subunit. When a sigma factor is associated with the core the holoenzyme is formed, which can initiate transcription.

It carries out the reaction RNA(n) + a ribonucleoside 5'-triphosphate = RNA(n+1) + diphosphate. DNA-dependent RNA polymerase catalyzes the transcription of DNA into RNA using the four ribonucleoside triphosphates as substrates. The protein is DNA-directed RNA polymerase subunit beta of Bradyrhizobium sp. (strain ORS 278).